Reading from the N-terminus, the 365-residue chain is S-adenosylmethionine decarboxylase proenzyme (365 aa).

Residues Glu-31 and Glu-34 contribute to the active site. Ser-87 (schiff-base intermediate with substrate; via pyruvic acid) is an active-site residue. Ser-87 carries the pyruvic acid (Ser); by autocatalysis modification. The active-site Proton donor; for catalytic activity is the Cys-101. Catalysis depends on proton acceptor; for processing activity residues Ser-248 and His-263.

Belongs to the eukaryotic AdoMetDC family. In terms of assembly, heterotetramer of two alpha and two beta chains. The cofactor is pyruvate. Post-translationally, is synthesized initially as an inactive proenzyme. Formation of the active enzyme involves a self-maturation process in which the active site pyruvoyl group is generated from an internal serine residue via an autocatalytic post-translational modification. Two non-identical subunits are generated from the proenzyme in this reaction, and the pyruvate is formed at the N-terminus of the alpha chain, which is derived from the carboxyl end of the proenzyme. The post-translation cleavage follows an unusual pathway, termed non-hydrolytic serinolysis, in which the side chain hydroxyl group of the serine supplies its oxygen atom to form the C-terminus of the beta chain, while the remainder of the serine residue undergoes an oxidative deamination to produce ammonia and the pyruvoyl group blocking the N-terminus of the alpha chain.

It catalyses the reaction S-adenosyl-L-methionine + H(+) = S-adenosyl 3-(methylsulfanyl)propylamine + CO2. It participates in amine and polyamine biosynthesis; S-adenosylmethioninamine biosynthesis; S-adenosylmethioninamine from S-adenosyl-L-methionine: step 1/1. The chain is S-adenosylmethionine decarboxylase proenzyme (smd-1) from Onchocerca volvulus.